The following is a 352-amino-acid chain: Potassium/proton antiporter CemA (352 aa).

The next 3 helical transmembrane spans lie at 52 to 72 (VLVS…IHFF), 227 to 247 (IAAL…IILF), and 312 to 332 (IILL…KYWI).

This sequence belongs to the CemA family.

It localises to the plastid. The protein resides in the chloroplast inner membrane. It catalyses the reaction K(+)(in) + H(+)(out) = K(+)(out) + H(+)(in). Its function is as follows. Contributes to K(+)/H(+) antiport activity by supporting proton efflux to control proton extrusion and homeostasis in chloroplasts in a light-dependent manner to modulate photosynthesis. Prevents excessive induction of non-photochemical quenching (NPQ) under continuous-light conditions. Indirectly promotes efficient inorganic carbon uptake into chloroplasts. This Oltmannsiellopsis viridis (Marine flagellate) protein is Potassium/proton antiporter CemA.